A 231-amino-acid chain; its full sequence is Probable cell wall protein ARB_06477 (231 aa).

The first 17 residues, 1-17 (MRSVLYLLFTAVAAVAA), serve as a signal peptide directing secretion. Positions 107-206 (TPSFMVDGAT…TGMPTSSGAP (100 aa)) are disordered. Residues 121–204 (TGPTTSRTSM…SSTGMPTSSG (84 aa)) are compositionally biased toward low complexity. Serine 203 is lipidated: GPI-anchor amidated serine. Positions 204–231 (GAPDPNGAVSLALPGGLLSIVLSLMALL) are cleaved as a propeptide — removed in mature form.

It belongs to the SRP1/TIP1 family. In terms of processing, the GPI-anchor is attached to the protein in the endoplasmic reticulum and serves to target the protein to the cell surface. There, the glucosamine-inositol phospholipid moiety is cleaved off and the GPI-modified mannoprotein is covalently attached via its lipidless GPI glycan remnant to the 1,6-beta-glucan of the outer cell wall layer.

The protein localises to the cell membrane. The protein resides in the secreted. It localises to the cell wall. Functionally, probable component of the cell wall. The protein is Probable cell wall protein ARB_06477 of Arthroderma benhamiae (strain ATCC MYA-4681 / CBS 112371) (Trichophyton mentagrophytes).